The sequence spans 842 residues: Serine/threonine-protein phosphatase 4 regulatory subunit 3 (842 aa).

In terms of assembly, regulatory subunit 3 (R3) of the histone H2A phosphatase complex (HTP-C) consisting of PPH3, PSY2 and PSY4.

It localises to the nucleus. In terms of biological role, core regulatory subunit of the histone H2A phosphatase complex, which dephosphorylates H2AS128ph (gamma-H2A) that has been displaced from sites of DNA lesions in the double-stranded DNA break repair process. Dephosphorylation is necessary for efficient recovery from the DNA damage checkpoint. The sequence is that of Serine/threonine-protein phosphatase 4 regulatory subunit 3 (PSY2) from Candida glabrata (strain ATCC 2001 / BCRC 20586 / JCM 3761 / NBRC 0622 / NRRL Y-65 / CBS 138) (Yeast).